A 679-amino-acid chain; its full sequence is DNA ligase (679 aa).

NAD(+) is bound by residues 41-45 (DSVYD), 90-91 (SL), and glutamate 120. Lysine 122 (N6-AMP-lysine intermediate) is an active-site residue. NAD(+) is bound by residues arginine 143, glutamate 177, lysine 293, and lysine 317. Cysteine 411, cysteine 414, cysteine 429, and cysteine 434 together coordinate Zn(2+). Residues 597–679 (DSNSWFAGKR…SETMREDAQA (83 aa)) enclose the BRCT domain.

The protein belongs to the NAD-dependent DNA ligase family. LigA subfamily. Mg(2+) serves as cofactor. Mn(2+) is required as a cofactor.

The catalysed reaction is NAD(+) + (deoxyribonucleotide)n-3'-hydroxyl + 5'-phospho-(deoxyribonucleotide)m = (deoxyribonucleotide)n+m + AMP + beta-nicotinamide D-nucleotide.. In terms of biological role, DNA ligase that catalyzes the formation of phosphodiester linkages between 5'-phosphoryl and 3'-hydroxyl groups in double-stranded DNA using NAD as a coenzyme and as the energy source for the reaction. It is essential for DNA replication and repair of damaged DNA. The protein is DNA ligase of Lactiplantibacillus plantarum (strain ATCC BAA-793 / NCIMB 8826 / WCFS1) (Lactobacillus plantarum).